Reading from the N-terminus, the 141-residue chain is Large ribosomal subunit protein uL23A (141 aa).

Residues S68 and S70 each carry the phosphoserine modification.

Belongs to the universal ribosomal protein uL23 family. Component of the large ribosomal subunit (LSU). Mature yeast ribosomes consist of a small (40S) and a large (60S) subunit. The 40S small subunit contains 1 molecule of ribosomal RNA (18S rRNA) and at least 33 different proteins. The large 60S subunit contains 3 rRNA molecules (25S, 5.8S and 5S rRNA) and at least 46 different proteins. uL23 is associated with the polypeptide exit tunnel.

It is found in the cytoplasm. In terms of biological role, this protein binds to a specific region on the 26S rRNA. Component of the ribosome, a large ribonucleoprotein complex responsible for the synthesis of proteins in the cell. The small ribosomal subunit (SSU) binds messenger RNAs (mRNAs) and translates the encoded message by selecting cognate aminoacyl-transfer RNA (tRNA) molecules. The large subunit (LSU) contains the ribosomal catalytic site termed the peptidyl transferase center (PTC), which catalyzes the formation of peptide bonds, thereby polymerizing the amino acids delivered by tRNAs into a polypeptide chain. The nascent polypeptides leave the ribosome through a tunnel in the LSU and interact with protein factors that function in enzymatic processing, targeting, and the membrane insertion of nascent chains at the exit of the ribosomal tunnel. uL23 is a major component of the universal docking site for these factors at the polypeptide exit tunnel. The polypeptide is Large ribosomal subunit protein uL23A (rpl2501) (Schizosaccharomyces pombe (strain 972 / ATCC 24843) (Fission yeast)).